We begin with the raw amino-acid sequence, 679 residues long: Glycine--tRNA ligase beta subunit (679 aa).

It belongs to the class-II aminoacyl-tRNA synthetase family. As to quaternary structure, tetramer of two alpha and two beta subunits.

The protein localises to the cytoplasm. The enzyme catalyses tRNA(Gly) + glycine + ATP = glycyl-tRNA(Gly) + AMP + diphosphate. This chain is Glycine--tRNA ligase beta subunit, found in Streptococcus pyogenes serotype M2 (strain MGAS10270).